Reading from the N-terminus, the 193-residue chain is Superoxide dismutase [Fe] (193 aa).

Residues H27, H75, D159, and H163 each coordinate Fe cation.

This sequence belongs to the iron/manganese superoxide dismutase family. As to quaternary structure, homodimer. Fe cation is required as a cofactor.

The catalysed reaction is 2 superoxide + 2 H(+) = H2O2 + O2. Its function is as follows. Destroys superoxide anion radicals which are normally produced within the cells and which are toxic to biological systems. In Bacteroides fragilis (strain YCH46), this protein is Superoxide dismutase [Fe] (sodB).